Here is a 253-residue protein sequence, read N- to C-terminus: Triosephosphate isomerase (253 aa).

9 to 11 (NWK) is a substrate binding site. His-95 (electrophile) is an active-site residue. Glu-167 (proton acceptor) is an active-site residue. Substrate contacts are provided by residues Gly-173, Ser-213, and 234–235 (GG). Ser-213 is modified (phosphoserine).

This sequence belongs to the triosephosphate isomerase family. In terms of assembly, homodimer.

Its subcellular location is the cytoplasm. The catalysed reaction is D-glyceraldehyde 3-phosphate = dihydroxyacetone phosphate. It functions in the pathway carbohydrate biosynthesis; gluconeogenesis. Its pathway is carbohydrate degradation; glycolysis; D-glyceraldehyde 3-phosphate from glycerone phosphate: step 1/1. In terms of biological role, involved in the gluconeogenesis. Catalyzes stereospecifically the conversion of dihydroxyacetone phosphate (DHAP) to D-glyceraldehyde-3-phosphate (G3P). This Geobacillus thermodenitrificans (strain NG80-2) protein is Triosephosphate isomerase.